A 512-amino-acid polypeptide reads, in one-letter code: GMP synthase [glutamine-hydrolyzing] (512 aa).

One can recognise a Glutamine amidotransferase type-1 domain in the interval 7–197; sequence TILILDFGGQ…LFEVCDCSAD (191 aa). Cys-84 (nucleophile) is an active-site residue. Active-site residues include His-171 and Glu-173. The GMPS ATP-PPase domain maps to 198–387; the sequence is WTMDSLIEQT…LGIPDEILYR (190 aa). Residue 225–231 participates in ATP binding; sequence SGGVDSA.

As to quaternary structure, homodimer.

It carries out the reaction XMP + L-glutamine + ATP + H2O = GMP + L-glutamate + AMP + diphosphate + 2 H(+). It participates in purine metabolism; GMP biosynthesis; GMP from XMP (L-Gln route): step 1/1. In terms of biological role, catalyzes the synthesis of GMP from XMP. The polypeptide is GMP synthase [glutamine-hydrolyzing] (Caldanaerobacter subterraneus subsp. tengcongensis (strain DSM 15242 / JCM 11007 / NBRC 100824 / MB4) (Thermoanaerobacter tengcongensis)).